Reading from the N-terminus, the 183-residue chain is ATP synthase subunit delta (183 aa).

The protein belongs to the ATPase delta chain family. F-type ATPases have 2 components, F(1) - the catalytic core - and F(0) - the membrane proton channel. F(1) has five subunits: alpha(3), beta(3), gamma(1), delta(1), epsilon(1). F(0) has three main subunits: a(1), b(2) and c(10-14). The alpha and beta chains form an alternating ring which encloses part of the gamma chain. F(1) is attached to F(0) by a central stalk formed by the gamma and epsilon chains, while a peripheral stalk is formed by the delta and b chains.

It localises to the cell inner membrane. Functionally, f(1)F(0) ATP synthase produces ATP from ADP in the presence of a proton or sodium gradient. F-type ATPases consist of two structural domains, F(1) containing the extramembraneous catalytic core and F(0) containing the membrane proton channel, linked together by a central stalk and a peripheral stalk. During catalysis, ATP synthesis in the catalytic domain of F(1) is coupled via a rotary mechanism of the central stalk subunits to proton translocation. Its function is as follows. This protein is part of the stalk that links CF(0) to CF(1). It either transmits conformational changes from CF(0) to CF(1) or is implicated in proton conduction. The protein is ATP synthase subunit delta of Ruthia magnifica subsp. Calyptogena magnifica.